The sequence spans 417 residues: Nucleosome assembly protein (417 aa).

The disordered stretch occupies residues 1–47 (MSDPIRTKPKSSMQIDNAPTPHNTPASVLNPSYLKNGNPVRAQAQEQ). Positions 10–35 (KSSMQIDNAPTPHNTPASVLNPSYLK) are enriched in polar residues. A phosphothreonine mark is found at threonine 20 and threonine 24. Phosphoserine is present on serine 27. A Glycyl lysine isopeptide (Lys-Gly) (interchain with G-Cter in ubiquitin) cross-link involves residue lysine 50. Threonine 53 is modified (phosphothreonine). Phosphoserine occurs at positions 69, 76, 82, 98, 104, and 140. The segment at 143–362 (EQPKPEQIAK…IPRAVDWFTG (220 aa)) is interaction with NBA1. Serine 159 and serine 177 each carry phosphoserine; by CK2. A DNA-binding region (H-T-H motif) is located at residues 330-356 (LEEDLEERLALDYSIGEQLKDKLIPRA). The tract at residues 364 to 417 (ALEFEFEEDEEEADEDEDEEEDDDHGLEDDDGESAEEQDDFAGRPEQAPECKQS) is disordered. Positions 367 to 403 (FEFEEDEEEADEDEDEEEDDDHGLEDDDGESAEEQDD) are enriched in acidic residues. Position 397 is a phosphoserine; by CK2 (serine 397). Residues 404–417 (FAGRPEQAPECKQS) show a composition bias toward basic and acidic residues.

The protein belongs to the nucleosome assembly protein (NAP) family. In terms of assembly, component of the GIN4 complex composed of at least BNI5, CDC3, CDC10, CDC11, CDC12, GIN4, NAP1 and SHS1 which forms a ring at the bud neck. Homodimer (in-vitro). Interacts with the B-type cyclin CLB2. Interacts with 60S ribosomal protein L18 (RPL18A or RPL18B), CKA2, CKI1, eukaryotic elongation factor 1 complex eEF1A (TEF1 or TEF2), FOL1, HSC82, HTA2, HTB2, HTZ1, KAP114, KCC4, NIS1, SSA1, SSA2, SSB1, SSC1, SHM1, SIP5 and TCO89. Interacts with NBA1. Interacts with histone H3/H4 heterodimers. In terms of processing, phosphorylation by CK2 is required for normal progression through S phase. CK2 phosphorylation is not required for correct bud formation nor histone binding.

It localises to the cytoplasm. The protein resides in the nucleus. The protein localises to the bud neck. Functionally, acidic protein, which assembles histones into an octamer (in vitro). Involved in the regulation of the localization and the function of the septins during mitosis. Involved in the function of B-type cyclins. The chain is Nucleosome assembly protein from Saccharomyces cerevisiae (strain ATCC 204508 / S288c) (Baker's yeast).